A 524-amino-acid chain; its full sequence is uncharacterized protein (524 aa).

A signal peptide spans 1 to 21 (MLLRSVWYKLGSLLIILPLTG). A lipid anchor (N-palmitoyl cysteine) is attached at Cys-22. Residue Cys-22 is the site of S-diacylglycerol cysteine attachment.

Belongs to the MG067/MG068/MG395 family.

It is found in the cell membrane. This is an uncharacterized protein from Mycoplasma pneumoniae (strain ATCC 29342 / M129 / Subtype 1) (Mycoplasmoides pneumoniae).